We begin with the raw amino-acid sequence, 503 residues long: Sodium/hydrogen exchanger 3 (503 aa).

At 1–22 (MVIGLSTMLEKTEALFASDHAS) the chain is on the cytoplasmic side. Residues 23-43 (VVSMNLFVALLCACIVLGHLL) form a helical membrane-spanning segment. At 44-51 (EETRWMNE) the chain is on the vacuolar side. Asn50 carries N-linked (GlcNAc...) asparagine glycosylation. The helical transmembrane segment at 52–72 (SITALIIGSCTGIVILLISGG) threads the bilayer. Over 73 to 76 (KSSR) the chain is Cytoplasmic. The segment at residues 77–97 (ILVFSEDLFFIYLLPPIIFNA) is an intramembrane region (helical). Residues 98-109 (GFQVKKKQFFRN) are Cytoplasmic-facing. Residues 110-130 (FMTIMLFGAIGTLISFVIISF) form a helical membrane-spanning segment. The Vacuolar portion of the chain corresponds to 131–138 (GAKHLFEK). Residues 139 to 159 (MNIGDLTIADYLAIGAIFSAT) form a helical membrane-spanning segment. Residues 160 to 174 (DSVCTLQVLNQDETP) are Cytoplasmic-facing. Residues 175–195 (LLYSLVFGEGVVNDATSVVLF) form a helical membrane-spanning segment. Topologically, residues 196-219 (NAIQRFDLTNINSAIALEFAGNFF) are vacuolar. Residues 220 to 240 (YLFILSTALGVAAGLLSAFVI) traverse the membrane as a helical segment. Residues 241–265 (KKLYIGRHSTDREVALMMLLAYLSY) are Cytoplasmic-facing. A helical transmembrane segment spans residues 266–286 (MLAELFHLSSILTVFFCGIVM). Residues 287 to 305 (SHYTWHNVTDKSKVTTKHT) are Vacuolar-facing. N-linked (GlcNAc...) asparagine glycosylation occurs at Asn293. Residues 306–326 (FAAMSFLAEIFIFLYVGMDAL) form a helical membrane-spanning segment. Residues 327–345 (DIEKWDVVRNSPGQSIGVS) are Cytoplasmic-facing. The helical transmembrane segment at 346–366 (SILLGLILLGRAAFVFPLSFL) threads the bilayer. The Vacuolar segment spans residues 367–383 (SNLTKSSPDEKIDLKKQ). An N-linked (GlcNAc...) asparagine glycan is attached at Asn368. A helical transmembrane segment spans residues 384-406 (VTIWWAGLMRGAVSMALAYNQFT). The Cytoplasmic portion of the chain corresponds to 407–416 (TSGHTKVLGN). Residues 417-437 (AIMITSTITVVLFSTVVFGLL) form a helical membrane-spanning segment. Over 438-503 (TKPLVKHLQP…FWKSPSRFTH (66 aa)) the chain is Vacuolar.

The protein belongs to the monovalent cation:proton antiporter 1 (CPA1) transporter (TC 2.A.36) family. As to expression, expressed in roots.

It localises to the vacuole membrane. It catalyses the reaction Na(+)(in) + H(+)(out) = Na(+)(out) + H(+)(in). The enzyme catalyses K(+)(in) + H(+)(out) = K(+)(out) + H(+)(in). In terms of biological role, may act in low affinity electroneutral exchange of protons for cations such as Na(+) or K(+) across membranes. May also exchange Li(+) and Cs(+) with a lower affinity. The polypeptide is Sodium/hydrogen exchanger 3 (NHX3) (Arabidopsis thaliana (Mouse-ear cress)).